A 765-amino-acid polypeptide reads, in one-letter code: Protein transport protein Sec23A (765 aa).

The Zn(2+) site is built by cysteine 61, cysteine 66, cysteine 85, and cysteine 88. One copy of the Gelsolin-like repeat lies at 632–718; it reads PEPVLLDSSS…EHGGSQARFL (87 aa).

It belongs to the SEC23/SEC24 family. SEC23 subfamily. COPII is composed of at least five proteins: the Sec23/24 complex, the Sec13/31 complex and Sar1.

It localises to the cytoplasmic vesicle. The protein localises to the COPII-coated vesicle membrane. It is found in the endoplasmic reticulum membrane. Its subcellular location is the cytoplasm. The protein resides in the cytosol. Component of the coat protein complex II (COPII) which promotes the formation of transport vesicles from the endoplasmic reticulum (ER). The coat has two main functions, the physical deformation of the endoplasmic reticulum membrane into vesicles and the selection of cargo molecules for their transport to the Golgi complex. The protein is Protein transport protein Sec23A of Xenopus tropicalis (Western clawed frog).